The sequence spans 256 residues: ATP synthase peripheral stalk subunit b, mitochondrial (256 aa).

A mitochondrion-targeting transit peptide spans 1 to 42; that stretch reads MLSRVVLSAAATAAPSLKNAAFLGPGVLQATRTFHTGQPHLV. Position 131 is an N6-succinyllysine (Lys131). An N6-acetyllysine mark is found at Lys139, Lys154, Lys162, Lys221, Lys233, and Lys244.

It belongs to the eukaryotic ATPase B chain family. In terms of assembly, component of the ATP synthase complex composed at least of ATP5F1A/subunit alpha, ATP5F1B/subunit beta, ATP5MC1/subunit c (homooctomer), MT-ATP6/subunit a, MT-ATP8/subunit 8, ATP5ME/subunit e, ATP5MF/subunit f, ATP5MG/subunit g, ATP5MK/subunit k, ATP5MJ/subunit j, ATP5F1C/subunit gamma, ATP5F1D/subunit delta, ATP5F1E/subunit epsilon, ATP5PF/subunit F6, ATP5PB/subunit b, ATP5PD/subunit d, ATP5PO/subunit OSCP. ATP synthase complex consists of a soluble F(1) head domain (subunits alpha(3) and beta(3)) - the catalytic core - and a membrane F(0) domain - the membrane proton channel (subunits c, a, 8, e, f, g, k and j). These two domains are linked by a central stalk (subunits gamma, delta, and epsilon) rotating inside the F1 region and a stationary peripheral stalk (subunits F6, b, d, and OSCP).

Its subcellular location is the mitochondrion. The protein resides in the mitochondrion inner membrane. Subunit b, of the mitochondrial membrane ATP synthase complex (F(1)F(0) ATP synthase or Complex V) that produces ATP from ADP in the presence of a proton gradient across the membrane which is generated by electron transport complexes of the respiratory chain. ATP synthase complex consist of a soluble F(1) head domain - the catalytic core - and a membrane F(1) domain - the membrane proton channel. These two domains are linked by a central stalk rotating inside the F(1) region and a stationary peripheral stalk. During catalysis, ATP synthesis in the catalytic domain of F(1) is coupled via a rotary mechanism of the central stalk subunits to proton translocation. In vivo, can only synthesize ATP although its ATP hydrolase activity can be activated artificially in vitro. Part of the complex F(0) domain. Part of the complex F(0) domain and the peripheric stalk, which acts as a stator to hold the catalytic alpha(3)beta(3) subcomplex and subunit a/ATP6 static relative to the rotary elements. The polypeptide is ATP synthase peripheral stalk subunit b, mitochondrial (Homo sapiens (Human)).